The primary structure comprises 32 residues: Beta-1,4-galactosyltransferase 1 (32 aa).

It belongs to the glycosyltransferase 7 family. Mn(2+) is required as a cofactor. The soluble form derives from the membrane form by proteolytic processing.

The protein resides in the golgi apparatus. It localises to the golgi stack membrane. Its subcellular location is the secreted. The protein localises to the cell membrane. It is found in the cell projection. The protein resides in the filopodium. It carries out the reaction D-glucose + UDP-alpha-D-galactose = lactose + UDP + H(+). The catalysed reaction is an N-acetyl-beta-D-glucosaminyl derivative + UDP-alpha-D-galactose = a beta-D-galactosyl-(1-&gt;4)-N-acetyl-beta-D-glucosaminyl derivative + UDP + H(+). It catalyses the reaction N-acetyl-D-glucosamine + UDP-alpha-D-galactose = beta-D-galactosyl-(1-&gt;4)-N-acetyl-D-glucosamine + UDP + H(+). The enzyme catalyses a beta-D-GlcNAc-(1-&gt;3)-beta-D-Gal-(1-&gt;4)-beta-D-Glc-(1&lt;-&gt;1)-Cer(d18:1(4E)) + UDP-alpha-D-galactose = a neolactoside nLc4Cer(d18:1(4E)) + UDP + H(+). It carries out the reaction a beta-D-glucosylceramide + UDP-alpha-D-galactose = a beta-D-galactosyl-(1-&gt;4)-beta-D-glucosyl-(1&lt;-&gt;1)-ceramide + UDP + H(+). The catalysed reaction is a neolactoside IV(3)-beta-GlcNAc-nLc4Cer + UDP-alpha-D-galactose = a neolactoside nLc6Cer + UDP + H(+). Its pathway is protein modification; protein glycosylation. This protein is responsible for the synthesis of complex-type N-linked oligosaccharides in many glycoproteins as well as the carbohydrate moieties of glycolipids. This chain is Beta-1,4-galactosyltransferase 1, found in Rattus norvegicus (Rat).